A 475-amino-acid chain; its full sequence is Ras-GEF domain-containing family member 1A (475 aa).

One can recognise an N-terminal Ras-GEF domain in the interval 33-164; that stretch reads QDGSLVSGSL…SISQMTQNVL (132 aa). The 248-residue stretch at 208–455 folds into the Ras-GEF domain; it reads DPLILAQQLT…FLASFENEGP (248 aa).

Functionally, guanine nucleotide exchange factor (GEF) with specificity for rap2a and other Ras family proteins (in vitro). Plays a role in cell migration. The sequence is that of Ras-GEF domain-containing family member 1A (rasgef1a) from Xenopus tropicalis (Western clawed frog).